A 55-amino-acid chain; its full sequence is Large ribosomal subunit protein bL33 (55 aa).

This sequence belongs to the bacterial ribosomal protein bL33 family.

The protein is Large ribosomal subunit protein bL33 of Buchnera aphidicola subsp. Schizaphis graminum (strain Sg).